The chain runs to 417 residues: Serine hydroxymethyltransferase (417 aa).

Residues Leu-120 and 124–126 each bind (6S)-5,6,7,8-tetrahydrofolate; that span reads GHL. Lys-229 carries the post-translational modification N6-(pyridoxal phosphate)lysine. 354 to 356 lines the (6S)-5,6,7,8-tetrahydrofolate pocket; sequence SPF.

It belongs to the SHMT family. In terms of assembly, homodimer. It depends on pyridoxal 5'-phosphate as a cofactor.

The protein resides in the cytoplasm. It carries out the reaction (6R)-5,10-methylene-5,6,7,8-tetrahydrofolate + glycine + H2O = (6S)-5,6,7,8-tetrahydrofolate + L-serine. The protein operates within one-carbon metabolism; tetrahydrofolate interconversion. It participates in amino-acid biosynthesis; glycine biosynthesis; glycine from L-serine: step 1/1. In terms of biological role, catalyzes the reversible interconversion of serine and glycine with tetrahydrofolate (THF) serving as the one-carbon carrier. This reaction serves as the major source of one-carbon groups required for the biosynthesis of purines, thymidylate, methionine, and other important biomolecules. Also exhibits THF-independent aldolase activity toward beta-hydroxyamino acids, producing glycine and aldehydes, via a retro-aldol mechanism. In Acinetobacter baumannii (strain AB307-0294), this protein is Serine hydroxymethyltransferase.